Reading from the N-terminus, the 118-residue chain is Basic phospholipase A2 PA-12C (118 aa).

Intrachain disulfides connect C11–C71, C27–C117, C29–C45, C44–C98, C51–C91, C60–C84, and C78–C89. Ca(2+) contacts are provided by Y28, G30, and G32. H48 is a catalytic residue. D49 is a Ca(2+) binding site. Residue D92 is part of the active site.

The protein belongs to the phospholipase A2 family. Group I subfamily. D49 sub-subfamily. Requires Ca(2+) as cofactor. As to expression, expressed by the venom gland.

Its subcellular location is the secreted. The enzyme catalyses a 1,2-diacyl-sn-glycero-3-phosphocholine + H2O = a 1-acyl-sn-glycero-3-phosphocholine + a fatty acid + H(+). Functionally, PLA2 catalyzes the calcium-dependent hydrolysis of the 2-acyl groups in 3-sn-phosphoglycerides. The protein is Basic phospholipase A2 PA-12C of Pseudechis australis (Mulga snake).